We begin with the raw amino-acid sequence, 285 residues long: Putative sugar uptake protein lmo0424 (285 aa).

A run of 9 helical transmembrane segments spans residues 2-21 (SIYL…PIIA), 31-50 (QLLG…FWIL), 55-77 (TVLS…LLQF), 111-133 (WQTV…GVVM), 146-168 (SVSF…YVVT), 172-194 (FDVT…AIGI), 207-229 (VTFN…LATA), 233-255 (VATS…ILIF), and 262-284 (LEWT…LSLL).

It belongs to the GRP transporter (TC 2.A.7.5) family.

The protein resides in the cell membrane. This is Putative sugar uptake protein lmo0424 from Listeria monocytogenes serovar 1/2a (strain ATCC BAA-679 / EGD-e).